Reading from the N-terminus, the 247-residue chain is Adenosylcobinamide-GDP ribazoletransferase (247 aa).

6 helical membrane passes run 31–51 (ILFYPLVGLIIGGILFLVTCI), 55–75 (LPALLLAAIVFALWIWLTGGL), 109–129 (IGVLSIVIVCLLKFALIYVLI), 135–155 (LFLICIPILGRVVPSILFLTT), 183–203 (VLLLPLYWEWQGLIAIISFLI), and 227–247 (AIEIGETVLIFTFVVSYFYLV).

Belongs to the CobS family. It depends on Mg(2+) as a cofactor.

It localises to the cell inner membrane. The enzyme catalyses alpha-ribazole + adenosylcob(III)inamide-GDP = adenosylcob(III)alamin + GMP + H(+). It carries out the reaction alpha-ribazole 5'-phosphate + adenosylcob(III)inamide-GDP = adenosylcob(III)alamin 5'-phosphate + GMP + H(+). The protein operates within cofactor biosynthesis; adenosylcobalamin biosynthesis; adenosylcobalamin from cob(II)yrinate a,c-diamide: step 7/7. In terms of biological role, joins adenosylcobinamide-GDP and alpha-ribazole to generate adenosylcobalamin (Ado-cobalamin). Also synthesizes adenosylcobalamin 5'-phosphate from adenosylcobinamide-GDP and alpha-ribazole 5'-phosphate. This is Adenosylcobinamide-GDP ribazoletransferase from Acinetobacter baumannii (strain ACICU).